We begin with the raw amino-acid sequence, 115 residues long: Secreted RxLR effector protein 2 (115 aa).

Residues 1 to 22 form the signal peptide; sequence MICRSPLIVVMLFVIAAHTVLA. Positions 57-82 match the RxLR-dEER motif; it reads RFLRQETTFEKKLGVNDVHAVHAEER.

The protein belongs to the RxLR effector family.

It localises to the secreted. It is found in the host cytoplasm. The protein localises to the host nucleus. In terms of biological role, effector that acts as a broad suppressor of cell death to interrupt plant immunity. Inhibits cell death induced by cell death-inducing proteins, including the PAMP elicitor INF1 from P.infestans. The chain is Secreted RxLR effector protein 2 from Plasmopara viticola (Downy mildew of grapevine).